The following is a 154-amino-acid chain: UPF0178 protein YaiI (154 aa).

This sequence belongs to the UPF0178 family.

This is UPF0178 protein YaiI from Escherichia coli (strain ATCC 8739 / DSM 1576 / NBRC 3972 / NCIMB 8545 / WDCM 00012 / Crooks).